The following is a 580-amino-acid chain: Micronemal protein 4 (580 aa).

The signal sequence occupies residues 1–25; sequence MRASLPVHLVVCTQLSAVWFGVAKA. Apple domains are found at residues 68–137, 141–214, 232–301, 305–375, 419–488, and 492–565; these read CVHS…SRSC, CFEQ…KQFC, CIQL…PKSC, CFSN…VTVG, CVHT…SRTC, and CLRR…YTFC. 15 disulfides stabilise this stretch: cysteine 68–cysteine 137, cysteine 93–cysteine 115, cysteine 97–cysteine 103, cysteine 141–cysteine 214, cysteine 166–cysteine 188, cysteine 170–cysteine 176, cysteine 232–cysteine 301, cysteine 257–cysteine 279, cysteine 261–cysteine 267, cysteine 305–cysteine 380, cysteine 332–cysteine 354, cysteine 336–cysteine 342, cysteine 419–cysteine 488, cysteine 444–cysteine 466, and cysteine 448–cysteine 454.

Monomer. Part of the MIC6-MIC1-MIC4 complex. Interacts (via the second apple domain) directly with MIC1 (via the beta-finger region). Interacts with murine TLR2; the interaction promotes activation of bone marrow-derived dendritic cells and macrophages in the host. Interacts with murine TLR4; the interaction promotes activation of bone marrow-derived dendritic cells and macrophages in the host. Post-translationally, proteolytically cleaved at the N- and C-terminus after release from the microneme.

It is found in the cytoplasmic vesicle. The protein resides in the secretory vesicle. It localises to the microneme. The protein localises to the host early endosome. Its activity is regulated as follows. Lacto-N-biose inhibits binding to asialofetuin, a host glycoprotein. In terms of biological role, soluble adhesin with carbohydrate-binding activity. Binds to galactose-terminating oligosaccharides. Required for attachment of the parasite to the host cell prior to invasion. Triggers the activation of murine bone marrow-derived dendritic cells and macrophages and production of pro-inflammatory cytokines, such as IL12 (IL12B/IL12A), in host TLR2/TLR4-dependent manner. Triggers the production of anti-inflammatory cytokine IL10 in murine bone marrow-derived macrophages in host TLR4-dependent manner. Induces transient endotoxin tolerance in murine bone marrow-derived macrophages, manifested by reduced TNF-alpha (TNF) production in response to challenge with lipopolysaccharides (LPS). This chain is Micronemal protein 4, found in Toxoplasma gondii.